Here is a 332-residue protein sequence, read N- to C-terminus: 2-oxoglutarate-dependent dioxygenase FG08081 (332 aa).

The Fe2OG dioxygenase domain occupies 176–280 (RSKSTLYFLH…RYSISYFLRA (105 aa)). The Fe cation site is built by histidine 201, aspartate 203, and histidine 258. 2-oxoglutarate is bound at residue arginine 271.

It belongs to the iron/ascorbate-dependent oxidoreductase family. Fe(2+) serves as cofactor.

The protein operates within mycotoxin biosynthesis. Functionally, 2-oxoglutarate-dependent dioxygenase; part of the gene cluster that mediates the biosynthesis of butenolide, a mycotoxin that shows antibiotic activity but does not seem to play a major role in the spread of head blight in wheat. Butenolide is derived from glutamic acid via a 4-acetamido-2-butenoic acid intermediate. The predicted function of the NADH:flavin oxidoreductase FG08077, the cytochrome P450 monooxygenase FG08079, the decarboxylase FG08083, and the putative acetyltransferase FG08082 are consistent with this pathway, however, the respective activities of the butelonide biosynthesis cluster enzymes have still to be experimentally determined. In Gibberella zeae (strain ATCC MYA-4620 / CBS 123657 / FGSC 9075 / NRRL 31084 / PH-1) (Wheat head blight fungus), this protein is 2-oxoglutarate-dependent dioxygenase FG08081.